The chain runs to 83 residues: uncharacterized protein (83 aa).

The next 2 helical transmembrane spans lie at 11–31 (FYCI…SFLL) and 48–68 (WHNL…HIWM).

The protein localises to the cell membrane. This is an uncharacterized protein from Bacillus subtilis (strain 168).